The sequence spans 368 residues: Probable dual-specificity RNA methyltransferase RlmN (368 aa).

The active-site Proton acceptor is the E100. Residues 106–344 (QHYGLSVCVT…CVVRQEHGTD (239 aa)) form the Radical SAM core domain. C113 and C349 form a disulfide bridge. [4Fe-4S] cluster contacts are provided by C120, C124, and C127. S-adenosyl-L-methionine is bound by residues 172–173 (GE), S204, 227–229 (SLH), and N305. Catalysis depends on C349, which acts as the S-methylcysteine intermediate.

Belongs to the radical SAM superfamily. RlmN family. It depends on [4Fe-4S] cluster as a cofactor.

It is found in the cytoplasm. It catalyses the reaction adenosine(2503) in 23S rRNA + 2 reduced [2Fe-2S]-[ferredoxin] + 2 S-adenosyl-L-methionine = 2-methyladenosine(2503) in 23S rRNA + 5'-deoxyadenosine + L-methionine + 2 oxidized [2Fe-2S]-[ferredoxin] + S-adenosyl-L-homocysteine. The catalysed reaction is adenosine(37) in tRNA + 2 reduced [2Fe-2S]-[ferredoxin] + 2 S-adenosyl-L-methionine = 2-methyladenosine(37) in tRNA + 5'-deoxyadenosine + L-methionine + 2 oxidized [2Fe-2S]-[ferredoxin] + S-adenosyl-L-homocysteine. Specifically methylates position 2 of adenine 2503 in 23S rRNA and position 2 of adenine 37 in tRNAs. In Streptococcus agalactiae serotype V (strain ATCC BAA-611 / 2603 V/R), this protein is Probable dual-specificity RNA methyltransferase RlmN.